The sequence spans 530 residues: Cytochrome P450 monooxygenase aneG (530 aa).

Asparagine 2 carries N-linked (GlcNAc...) asparagine glycosylation. A helical membrane pass occupies residues 43 to 63 (WLSILGFTIGCYYVIYTFYAL). Asparagine 92 carries an N-linked (GlcNAc...) asparagine glycan. Cysteine 474 is a heme binding site.

The protein belongs to the cytochrome P450 family. Heme is required as a cofactor.

It is found in the membrane. It carries out the reaction asperaculane E + reduced [NADPH--hemoprotein reductase] + O2 = asperaculane G + oxidized [NADPH--hemoprotein reductase] + H2O + H(+). The catalysed reaction is asperaculane G + reduced [NADPH--hemoprotein reductase] + O2 = aculene D + oxidized [NADPH--hemoprotein reductase] + CO2 + 2 H2O. The enzyme catalyses asperaculane E + 2 reduced [NADPH--hemoprotein reductase] + 2 O2 = aculene D + 2 oxidized [NADPH--hemoprotein reductase] + CO2 + 3 H2O + H(+). The protein operates within secondary metabolite biosynthesis. Its function is as follows. Cytochrome P450 monooxygenase; part of the gene cluster that mediates the biosynthesis of aculenes, a unique type of norsesquiterpenes that contain a nordaucane skeleton linked to an L-proline moiety and are of mixed biosynthetic origin. The pathway begins with the synthesis of dauca-4,7-diene by the terpene cyclase aneC using farnesyl pyrophosphate (FPP) as substrate. The cytochrome P450 monooxygenase aneF then performs the initial oxidation at C-12 of dauca-4,7-diene to yield asperaculane D. Asperaculane D is substrate of the cytochrome P450 monooxygenase aneD for C-10 hydroxylation to yield asperaculane E. The cytochrome P450 monooxygenase aneG then converts asperaculane E into aculene D via C-2 oxidation. The monomodular nonribosomal peptide synthtase aneB adenylates L-proline and the thiohydrolase aneE transfers this activated L-proline derivative to aculenes D and C to produce respectively aculenes B and A. The dioxygenase aneA converts aculene D into aculene C, and aculene B into aculene A by introducing the 5,6-alkene moiety. Asperculanes A, B, C and F, as well as 14-prolyl asperculane C, might be shunt products of the pathway. In Aspergillus aculeatus (strain ATCC 16872 / CBS 172.66 / WB 5094), this protein is Cytochrome P450 monooxygenase aneG.